The sequence spans 346 residues: Selenide, water dikinase (346 aa).

Selenocysteine 16 is a catalytic residue. Residue selenocysteine 16 is a non-standard amino acid, selenocysteine. ATP-binding positions include lysine 19 and threonine 47–aspartate 49. Mg(2+) is bound at residue aspartate 50. ATP-binding positions include aspartate 67, aspartate 90, and glycine 138 to serine 140. Position 90 (aspartate 90) interacts with Mg(2+). Aspartate 226 serves as a coordination point for Mg(2+).

This sequence belongs to the selenophosphate synthase 1 family. Class I subfamily. As to quaternary structure, homodimer. Mg(2+) is required as a cofactor.

The enzyme catalyses hydrogenselenide + ATP + H2O = selenophosphate + AMP + phosphate + 2 H(+). In terms of biological role, synthesizes selenophosphate from selenide and ATP. The chain is Selenide, water dikinase from Haemophilus ducreyi (strain 35000HP / ATCC 700724).